The chain runs to 136 residues: Pilotin AspS 2 (136 aa).

The signal sequence occupies residues Met1–Gly24. Cys25 carries the N-palmitoyl cysteine lipid modification. A lipid anchor (S-diacylglycerol cysteine) is attached at Cys25. The cysteines at positions 94 and 131 are disulfide-linked.

This sequence belongs to the GspS/AspS pilotin family. As to quaternary structure, cryo-electron microscopy shows that the complex forms a cylindrical channel with 15 GspD2 subunits, each of which interacts with its surrounding AspS2 (GspS-beta).

It localises to the cell outer membrane. Part of a type II secretion system (T2SS, formerly general secretion pathway, GSP) for the export of folded proteins across the outer membrane. Required for correct assembly of the type II secretion system-beta (T2SS-beta), for localization of GspD-beta to the cell outer membrane and for export of a labile enterotoxin by T2SS-beta. Each AspS2 binds to 2 GspD2 subunits and may clamp the monomers together, stabilizing structure and accelerating its assembly. This chain is Pilotin AspS 2, found in Escherichia coli O78:H11 (strain H10407 / ETEC).